A 364-amino-acid chain; its full sequence is 3'(2'),5'-bisphosphate nucleotidase 1 (364 aa).

The active-site Proton acceptor is Asp54. The Mg(2+) site is built by Glu77, Asp141, Ile143, and Asp144. Thr146 acts as the Proton acceptor in catalysis. Positions 146, 243, 272, 275, 289, and 302 each coordinate adenosine 3',5'-bisphosphate. Residues His243, Ser272, Lys275, Arg289, and Asp302 each coordinate AMP. Residue Asp302 coordinates Mg(2+).

The protein belongs to the inositol monophosphatase superfamily. Mg(2+) serves as cofactor.

It catalyses the reaction 3'-phosphoadenylyl sulfate + H2O = adenosine 5'-phosphosulfate + phosphate. The catalysed reaction is adenosine 3',5'-bisphosphate + H2O = AMP + phosphate. It carries out the reaction adenosine 2',5'-bisphosphate + H2O = AMP + phosphate. Its function is as follows. Phosphatase that converts adenosine 3'-phosphate 5'-phosphosulfate (PAPS) to adenosine 5'-phosphosulfate (APS) and 3'(2')-phosphoadenosine 5'-phosphate (PAP) to AMP. Regulates the flux of sulfur in the sulfur-activation pathway by converting PAPS to APS. Involved in salt tolerance. This Candida albicans (strain WO-1) (Yeast) protein is 3'(2'),5'-bisphosphate nucleotidase 1 (HAL21).